Consider the following 899-residue polypeptide: Periodic tryptophan protein 2 homolog (899 aa).

WD repeat units lie at residues 9-52 (NLLG…TLPF), 53-92 (SHRKNIARIGLTPQGNLLLSIDEDGQAILTNVPRRVVLYH), 94-132 (SFKAPVTALSFSPSGRHFIVGLGRKIEVWHVPSTPDANA), 149-188 (QHFDDVRHIEWSHDSRFFLTSSKDLTARIWSVDQEEGFTP), 193-232 (GHRQGVVGAWFSKDQETIYTVSKDGAVFDWQYVAKPGQDE), 252-291 (QNSATVRCAAFHPESNLLVAGFSNGIFGLYEMPDFNMIHT), 294-334 (ISQN…YILK), 337-376 (GHFDSMNSLVYSPDGQRIVTVADDGKIKVWDTESGFCIVT), 379-418 (EHTSGITACEFSKKGNVLFTSSLDGSIRAWDLIRYRNFRT), 422-464 (PERL…DRLS), 465-504 (GHEGPVSSLAFAPNGGLLVSGSWDRTARIWSIFNRTQTSE), 507-546 (QLNSDVLDIAFRPDSLQIAISTLDGNLSFWSVSEAEQQAG), and 569-608 (AGTKAFNTIRYSTDGSCLLAGGNSKYICLYSVTTMVLLKK). Residues 639–668 (DEQGEASDFEDRIDRSLPGSKRGDPSARRK) are disordered. The segment covering 647-668 (FEDRIDRSLPGSKRGDPSARRK) has biased composition (basic and acidic residues). The WD 14 repeat unit spans residues 669–709 (NPEVRVNGVAFSPNGSAFCAASTEGLLIYSLDTTIQFDPFD). A disordered region spans residues 866–899 (TGSDEQPGAGGMSLNDVMQQDEGNASEDEWIGLV). Acidic residues predominate over residues 889–899 (NASEDEWIGLV).

Belongs to the WD repeat PWP2 family.

The sequence is that of Periodic tryptophan protein 2 homolog from Neurospora crassa (strain ATCC 24698 / 74-OR23-1A / CBS 708.71 / DSM 1257 / FGSC 987).